The sequence spans 205 residues: MFLRHCITFTLIALLAGCAGFGSREALQGHGDPQQWRAHKEQLSSLDGWQINGKVGIRAPRDSGSGTLFWLQRQDYYDIRLAGPLGRGAARLTGRPGGVVLEVANQGRYEATSPEALLEEQLGWQLPVSHLVWWVRGLPAPDSKSKLTLDGDSRLASLDQDGWQVQYLSYTEQNGYWLPERLKLHGKDLDVTLVVKDWQPRQLGH.

The N-terminal stretch at 1–17 is a signal peptide; sequence MFLRHCITFTLIALLAG. Cys18 carries N-palmitoyl cysteine lipidation. Cys18 carries S-diacylglycerol cysteine lipidation.

The protein belongs to the LolB family. In terms of assembly, monomer.

It localises to the cell outer membrane. Plays a critical role in the incorporation of lipoproteins in the outer membrane after they are released by the LolA protein. The polypeptide is Outer-membrane lipoprotein LolB (Pseudomonas putida (strain GB-1)).